The following is a 123-amino-acid chain: WAP four-disulfide core domain protein 5 (123 aa).

A signal peptide spans 1-24 (MRIQSLLLLGALLAVGSQPPAAFG). 2 WAP domains span residues 27 to 73 (KGEK…CVPR) and 74 to 121 (VSVK…RDPV). 8 disulfides stabilise this stretch: Cys34–Cys62, Cys41–Cys66, Cys49–Cys61, Cys55–Cys70, Cys81–Cys109, Cys88–Cys113, Cys96–Cys108, and Cys102–Cys117.

It localises to the secreted. Functionally, putative acid-stable proteinase inhibitor. The chain is WAP four-disulfide core domain protein 5 (WFDC5) from Aotus nancymaae (Ma's night monkey).